Here is a 208-residue protein sequence, read N- to C-terminus: Protein late bloomer (208 aa).

A run of 4 helical transmembrane segments spans residues 10 to 30, 41 to 61, 67 to 87, and 174 to 194; these read IASI…IGWI, FVIA…LGIF, SVVL…LQIV, and FIIV…LAVF.

This sequence belongs to the tetraspanin (TM4SF) family. In terms of tissue distribution, transiently expressed on motor axons, growth cones and terminal arbors.

The protein resides in the membrane. It is found in the synapse. Its function is as follows. Facilitates synapse formation. This Drosophila melanogaster (Fruit fly) protein is Protein late bloomer (lbm).